Consider the following 258-residue polypeptide: Malonyl-[acyl-carrier protein] O-methyltransferase (258 aa).

Belongs to the methyltransferase superfamily.

The catalysed reaction is malonyl-[ACP] + S-adenosyl-L-methionine = malonyl-[ACP] methyl ester + S-adenosyl-L-homocysteine. The protein operates within cofactor biosynthesis; biotin biosynthesis. Converts the free carboxyl group of a malonyl-thioester to its methyl ester by transfer of a methyl group from S-adenosyl-L-methionine (SAM). It allows to synthesize pimeloyl-ACP via the fatty acid synthetic pathway. This chain is Malonyl-[acyl-carrier protein] O-methyltransferase, found in Haemophilus ducreyi (strain 35000HP / ATCC 700724).